The sequence spans 244 residues: tRNA (guanine-N(7)-)-methyltransferase (244 aa).

Positions 1-20 (MTNPFDSAGSKAPPKPFTVS) are disordered. 4 residues coordinate S-adenosyl-L-methionine: glutamate 75, glutamate 100, aspartate 127, and aspartate 150. Aspartate 150 is an active-site residue. Lysine 154 provides a ligand contact to substrate. The interval 156–161 (RHNKRR) is interaction with RNA. Residues aspartate 186 and 223 to 226 (THFE) contribute to the substrate site.

It belongs to the class I-like SAM-binding methyltransferase superfamily. TrmB family.

The catalysed reaction is guanosine(46) in tRNA + S-adenosyl-L-methionine = N(7)-methylguanosine(46) in tRNA + S-adenosyl-L-homocysteine. Its pathway is tRNA modification; N(7)-methylguanine-tRNA biosynthesis. Catalyzes the formation of N(7)-methylguanine at position 46 (m7G46) in tRNA. The protein is tRNA (guanine-N(7)-)-methyltransferase of Stenotrophomonas maltophilia (strain K279a).